Here is a 352-residue protein sequence, read N- to C-terminus: N-acetyl-gamma-glutamyl-phosphate reductase (352 aa).

The active site involves Cys155.

It belongs to the NAGSA dehydrogenase family. Type 1 subfamily.

The protein resides in the cytoplasm. The enzyme catalyses N-acetyl-L-glutamate 5-semialdehyde + phosphate + NADP(+) = N-acetyl-L-glutamyl 5-phosphate + NADPH + H(+). It functions in the pathway amino-acid biosynthesis; L-arginine biosynthesis; N(2)-acetyl-L-ornithine from L-glutamate: step 3/4. Functionally, catalyzes the NADPH-dependent reduction of N-acetyl-5-glutamyl phosphate to yield N-acetyl-L-glutamate 5-semialdehyde. This Rippkaea orientalis (strain PCC 8801 / RF-1) (Cyanothece sp. (strain PCC 8801)) protein is N-acetyl-gamma-glutamyl-phosphate reductase.